The sequence spans 255 residues: GTP cyclohydrolase III (255 aa).

It belongs to the archaeal-type GTP cyclohydrolase family.

The catalysed reaction is GTP + 3 H2O = 2-amino-5-formylamino-6-(5-phospho-D-ribosylamino)pyrimidin-4(3H)-one + 2 phosphate + 2 H(+). Its function is as follows. Catalyzes the formation of 2-amino-5-formylamino-6-ribofuranosylamino-4(3H)-pyrimidinone ribonucleotide monophosphate and inorganic phosphate from GTP. Also has an independent pyrophosphate phosphohydrolase activity. The sequence is that of GTP cyclohydrolase III from Methanosphaera stadtmanae (strain ATCC 43021 / DSM 3091 / JCM 11832 / MCB-3).